Consider the following 1314-residue polypeptide: Condensin-2 complex subunit CAP-D3 (1314 aa).

HEAT repeat units lie at residues 20-58 (ESDY…SFLR), 98-136 (PIAF…KKRG), 184-222 (KSLV…GVLN), 231-267 (TAAE…SLAK), 269-310 (NPEL…AMEV), 331-360 (RVLA…GLKD), 361-398 (SWGL…FLSG), 417-455 (SEGK…LMGG), 457-493 (FDGS…ICTD), and 494-532 (EIVT…ERIL). Positions 116 to 150 (DDSAGQGSNSQREKGNKKKRGRGKRNLGYEDGEET) are disordered. The segment covering 130–140 (GNKKKRGRGKR) has biased composition (basic residues). The Nuclear localization signal signature appears at 789–796 (SRRSKRLD). 6 HEAT repeats span residues 821-859 (SADT…KQKA), 878-916 (GKLA…VHYT), 917-954 (AMIE…RDYV), 956-992 (WRGV…VKAP), 1053-1091 (QMAP…SVLQ), and 1138-1179 (KGLI…DYKN). Disordered regions lie at residues 1210–1237 (MANQ…ENVR) and 1265–1314 (VNGG…DDES).

As to quaternary structure, component of the condensin-2 complex. In terms of tissue distribution, present in buds.

The protein resides in the nucleus. Its subcellular location is the chromosome. In terms of biological role, regulatory subunit of the condensin-2 complex, a complex which establishes mitotic chromosome architecture and is involved in physical rigidity of the chromatid axis. May promote the resolution of double-strand DNA catenanes (intertwines) between sister chromatids. Required for plant vigor, fertility, chromatin condensation and sister chromatid cohesion both during mitosis and meiosis. Necessary to maintain normal structural integrity of the meiotic chromosomes during the two nuclear divisions of gametogenesis, especially to prevent interchromosome connections at metaphase I. Seems also involved in crossover formation during meiotic prophase I. Prevents centromeric and pericentromeric heterochromatin repeats association. The sequence is that of Condensin-2 complex subunit CAP-D3 from Arabidopsis thaliana (Mouse-ear cress).